The sequence spans 445 residues: ATP-dependent protease ATPase subunit HslU (445 aa).

Residues isoleucine 17, glycine 59–glutamate 64, aspartate 254, glutamate 319, and arginine 391 each bind ATP.

This sequence belongs to the ClpX chaperone family. HslU subfamily. As to quaternary structure, a double ring-shaped homohexamer of HslV is capped on each side by a ring-shaped HslU homohexamer. The assembly of the HslU/HslV complex is dependent on binding of ATP.

The protein localises to the cytoplasm. ATPase subunit of a proteasome-like degradation complex; this subunit has chaperone activity. The binding of ATP and its subsequent hydrolysis by HslU are essential for unfolding of protein substrates subsequently hydrolyzed by HslV. HslU recognizes the N-terminal part of its protein substrates and unfolds these before they are guided to HslV for hydrolysis. The sequence is that of ATP-dependent protease ATPase subunit HslU from Pseudomonas fluorescens (strain Pf0-1).